Consider the following 447-residue polypeptide: Acidic leucine-rich nuclear phosphoprotein 32-related protein (447 aa).

LRR repeat units lie at residues 49–70, 71–90, and 96–117; these read NLQHLSVANIGVSSLEQFPRLG, NLQKLILSDNRITVGLEFLV, and SFCDLDLSNNRIQFVEDLAPLA. The region spanning 129–167 is the LRRCT domain; it reads CPVTRLKDYRSRVFGLIKTLKYLDKTDAEGNERPESDDE. The disordered stretch occupies residues 155-447; sequence DAEGNERPES…EDDDDDDEER (293 aa). Acidic residues-rich tracts occupy residues 163–194 and 215–231; these read ESDDEDDEEDEEDEEEEEEGDEEDPGSGEIDG and VDVDEDEESDAEDDESE. Over residues 232–242 the composition is skewed to polar residues; sequence QATGVNGTSYR. 5 stretches are compositionally biased toward acidic residues: residues 256–277, 284–309, 336–374, 397–415, and 433–447; these read VREDDGDDSESGEEEVGEDNDV, EDSENEEDGVDDEEDDEEDEEEEEVD, GDDDEDGDGETGEDDQGVEDDGEFADEDDDVEEEDEESG, PINEDNDPDEEEEVEDDLP, and DDDDGEDDDDDDEER.

Belongs to the ANP32 family.

This chain is Acidic leucine-rich nuclear phosphoprotein 32-related protein, found in Arabidopsis thaliana (Mouse-ear cress).